The primary structure comprises 130 residues: Iron-sulfur cluster insertion protein ErpA 2 (130 aa).

The iron-sulfur cluster site is built by Cys-58, Cys-122, and Cys-124.

It belongs to the HesB/IscA family. Homodimer. It depends on iron-sulfur cluster as a cofactor.

Functionally, required for insertion of 4Fe-4S clusters for at least IspG. This is Iron-sulfur cluster insertion protein ErpA 2 from Methylococcus capsulatus (strain ATCC 33009 / NCIMB 11132 / Bath).